A 160-amino-acid chain; its full sequence is Large ribosomal subunit protein uL22c (160 aa).

The protein belongs to the universal ribosomal protein uL22 family. As to quaternary structure, part of the 50S ribosomal subunit.

Its subcellular location is the plastid. The protein localises to the chloroplast. In terms of biological role, this protein binds specifically to 23S rRNA. The globular domain of the protein is located near the polypeptide exit tunnel on the outside of the subunit, while an extended beta-hairpin is found that lines the wall of the exit tunnel in the center of the 70S ribosome. The sequence is that of Large ribosomal subunit protein uL22c (rpl22) from Panax ginseng (Korean ginseng).